The primary structure comprises 107 residues: Putative double-stranded DNA mimic protein NTHI1680 (107 aa).

This sequence belongs to the putative dsDNA mimic protein family.

Its function is as follows. May act as a double-stranded DNA (dsDNA) mimic. Probably regulates the activity of a dsDNA-binding protein. This Haemophilus influenzae (strain 86-028NP) protein is Putative double-stranded DNA mimic protein NTHI1680.